Here is an 845-residue protein sequence, read N- to C-terminus: Taste receptor type 1 member 3 (845 aa).

The signal sequence occupies residues 1 to 18; the sequence is MAGLMLLSLMALLGLGAG. The Extracellular portion of the chain corresponds to 19 to 568; sequence APLCLSRQLR…FLAWGQPAVL (550 aa). 2 N-linked (GlcNAc...) asparagine glycosylation sites follow: Asn128 and Asn262. The helical transmembrane segment at 569–589 threads the bilayer; it reads VLLILLALALGLVLVALGLFI. Residues 590-601 lie on the Cytoplasmic side of the membrane; that stretch reads RHRDSPLVQASG. A helical transmembrane segment spans residues 602–622; the sequence is GPRACFGLACLGLVCLSVLLF. Over 623-637 the chain is Extracellular; sequence PGQPGPASCLAQQPL. Residues 638-658 form a helical membrane-spanning segment; it reads LHLPLTGCLSTLFLQAAQIFV. The Cytoplasmic segment spans residues 659–680; it reads GSELPSSWADQLRRCLQGPWAW. A helical transmembrane segment spans residues 681–701; that stretch reads LLVLLALLAEAALCAWYLVAF. The Extracellular portion of the chain corresponds to 702–727; that stretch reads PPEVVTDWWVLPTQVLVHCRMRSWIS. The helical transmembrane segment at 728 to 748 threads the bilayer; the sequence is FGLLHAINAMLAFLCFLGTFL. The Cytoplasmic portion of the chain corresponds to 749–760; the sequence is VQSRPGRYNGAR. Residues 761 to 781 traverse the membrane as a helical segment; the sequence is GLTFAMLAYFITWISFVPLFA. The Extracellular portion of the chain corresponds to 782 to 789; it reads NVHVAYQP. Residues 790-810 form a helical membrane-spanning segment; the sequence is TVQMAAILLCALGILATFHLP. The Cytoplasmic segment spans residues 811 to 845; it reads KCYLLLQQLELNNPEFFLGDDARGQGSSGSGGKET.

It belongs to the G-protein coupled receptor 3 family. TAS1R subfamily. Forms homodimers or heterodimers with TAS1R1 and TAS1R2.

The protein localises to the cell membrane. Putative taste receptor. TAS1R1/TAS1R3 responds to the umami taste stimulus (the taste of monosodium glutamate). TAS1R2/TAS1R3 recognizes diverse natural and synthetic sweeteners. TAS1R3 is essential for the recognition and response to the disaccharide trehalose. Sequence differences within and between species can significantly influence the selectivity and specificity of taste responses. The protein is Taste receptor type 1 member 3 (TAS1R3) of Canis lupus familiaris (Dog).